The chain runs to 259 residues: Ribonuclease PH (259 aa).

Phosphate contacts are provided by residues arginine 88 and 126–128; that span reads GTR.

The protein belongs to the RNase PH family. As to quaternary structure, homohexameric ring arranged as a trimer of dimers.

It catalyses the reaction tRNA(n+1) + phosphate = tRNA(n) + a ribonucleoside 5'-diphosphate. Functionally, phosphorolytic 3'-5' exoribonuclease that plays an important role in tRNA 3'-end maturation. Removes nucleotide residues following the 3'-CCA terminus of tRNAs; can also add nucleotides to the ends of RNA molecules by using nucleoside diphosphates as substrates, but this may not be physiologically important. Probably plays a role in initiation of 16S rRNA degradation (leading to ribosome degradation) during starvation. This Mycolicibacterium paratuberculosis (strain ATCC BAA-968 / K-10) (Mycobacterium paratuberculosis) protein is Ribonuclease PH.